A 371-amino-acid polypeptide reads, in one-letter code: tRNA N6-adenosine threonylcarbamoyltransferase (371 aa).

2 residues coordinate Fe cation: His-110 and His-114. Substrate-binding positions include 132-136 (LVSGG), Asp-165, Gly-178, Asp-182, and Asn-289. Asp-317 provides a ligand contact to Fe cation.

This sequence belongs to the KAE1 / TsaD family. It depends on Fe(2+) as a cofactor.

The protein resides in the cytoplasm. The catalysed reaction is L-threonylcarbamoyladenylate + adenosine(37) in tRNA = N(6)-L-threonylcarbamoyladenosine(37) in tRNA + AMP + H(+). Functionally, required for the formation of a threonylcarbamoyl group on adenosine at position 37 (t(6)A37) in tRNAs that read codons beginning with adenine. Is involved in the transfer of the threonylcarbamoyl moiety of threonylcarbamoyl-AMP (TC-AMP) to the N6 group of A37, together with TsaE and TsaB. TsaD likely plays a direct catalytic role in this reaction. The protein is tRNA N6-adenosine threonylcarbamoyltransferase of Solidesulfovibrio magneticus (strain ATCC 700980 / DSM 13731 / RS-1) (Desulfovibrio magneticus).